The primary structure comprises 331 residues: Type II secretion system protein K (331 aa).

A propeptide spans 1–9 (MPSCRRQGG) (leader sequence). A helical membrane pass occupies residues 8-27 (GGMALLVVLLILSVMVIIAS). Residues 28 to 331 (NMSGRLQLEL…MLRRLNGGAE (304 aa)) are Periplasmic-facing.

This sequence belongs to the GSP K family. Type II secretion is composed of four main components: the outer membrane complex, the inner membrane complex, the cytoplasmic secretion ATPase and the periplasm-spanning pseudopilus. Interacts with core component ExeG. Post-translationally, cleaved by prepilin peptidase.

The protein localises to the cell inner membrane. Functionally, component of the type II secretion system required for the energy-dependent secretion of extracellular factors such as proteases and toxins from the periplasm. Plays a role in pseudopilus assembly and seems to control its length. Interacts with the pseudopilus tip complex that is critical for the recognition and binding of secretion substrates. The sequence is that of Type II secretion system protein K (exeK) from Aeromonas hydrophila.